The primary structure comprises 511 residues: Maturase K (511 aa).

It belongs to the intron maturase 2 family. MatK subfamily.

Its subcellular location is the plastid. It is found in the chloroplast. In terms of biological role, usually encoded in the trnK tRNA gene intron. Probably assists in splicing its own and other chloroplast group II introns. This Adesmia lanata protein is Maturase K.